The chain runs to 331 residues: Beta-ketoacyl-[acyl-carrier-protein] synthase III (331 aa).

Active-site residues include cysteine 115 and histidine 255. Positions 256–260 (QANFR) are ACP-binding. Asparagine 285 is an active-site residue.

Belongs to the thiolase-like superfamily. FabH family. In terms of assembly, homodimer.

It localises to the cytoplasm. The enzyme catalyses malonyl-[ACP] + acetyl-CoA + H(+) = 3-oxobutanoyl-[ACP] + CO2 + CoA. The protein operates within lipid metabolism; fatty acid biosynthesis. Catalyzes the condensation reaction of fatty acid synthesis by the addition to an acyl acceptor of two carbons from malonyl-ACP. Catalyzes the first condensation reaction which initiates fatty acid synthesis and may therefore play a role in governing the total rate of fatty acid production. Possesses both acetoacetyl-ACP synthase and acetyl transacylase activities. Its substrate specificity determines the biosynthesis of branched-chain and/or straight-chain of fatty acids. The protein is Beta-ketoacyl-[acyl-carrier-protein] synthase III of Helicobacter pylori (strain J99 / ATCC 700824) (Campylobacter pylori J99).